We begin with the raw amino-acid sequence, 521 residues long: Probable glycine dehydrogenase (decarboxylating) subunit 2 (521 aa).

The residue at position 279 (K279) is an N6-(pyridoxal phosphate)lysine.

Belongs to the GcvP family. C-terminal subunit subfamily. The glycine cleavage system is composed of four proteins: P, T, L and H. In this organism, the P 'protein' is a heterodimer of two subunits. Requires pyridoxal 5'-phosphate as cofactor.

It catalyses the reaction N(6)-[(R)-lipoyl]-L-lysyl-[glycine-cleavage complex H protein] + glycine + H(+) = N(6)-[(R)-S(8)-aminomethyldihydrolipoyl]-L-lysyl-[glycine-cleavage complex H protein] + CO2. Functionally, the glycine cleavage system catalyzes the degradation of glycine. The P protein binds the alpha-amino group of glycine through its pyridoxal phosphate cofactor; CO(2) is released and the remaining methylamine moiety is then transferred to the lipoamide cofactor of the H protein. The polypeptide is Probable glycine dehydrogenase (decarboxylating) subunit 2 (Staphylothermus marinus (strain ATCC 43588 / DSM 3639 / JCM 9404 / F1)).